The chain runs to 82 residues: T-complex protein 1 subunit gamma (82 aa).

G15 is a binding site for ADP. An ATP-binding site is contributed by G15. Residue D66 participates in Mg(2+) binding. Positions 67, 68, 69, and 70 each coordinate ADP. ATP-binding residues include G67, T68, and T69.

Belongs to the TCP-1 chaperonin family. As to quaternary structure, component of the chaperonin-containing T-complex (TRiC), a hexadecamer composed of two identical back-to-back stacked rings enclosing a protein folding chamber. Each ring is made up of eight different subunits: TCP1/CCT1, CCT2, CCT3, CCT4, CCT5, CCT6A/CCT6, CCT7, CCT8. Interacts with PACRG. Interacts with DNAAF4. Interacts with DLEC1.

The protein resides in the cytoplasm. It catalyses the reaction ATP + H2O = ADP + phosphate + H(+). In terms of biological role, component of the chaperonin-containing T-complex (TRiC), a molecular chaperone complex that assists the folding of actin, tubulin and other proteins upon ATP hydrolysis. The TRiC complex mediates the folding of WRAP53/TCAB1, thereby regulating telomere maintenance. As part of the TRiC complex may play a role in the assembly of BBSome, a complex involved in ciliogenesis regulating transports vesicles to the cilia. The polypeptide is T-complex protein 1 subunit gamma (CCT3) (Sus scrofa (Pig)).